The chain runs to 100 residues: Urease subunit gamma (100 aa).

The protein belongs to the urease gamma subunit family. Heterotrimer of UreA (gamma), UreB (beta) and UreC (alpha) subunits. Three heterotrimers associate to form the active enzyme.

The protein resides in the cytoplasm. It carries out the reaction urea + 2 H2O + H(+) = hydrogencarbonate + 2 NH4(+). Its pathway is nitrogen metabolism; urea degradation; CO(2) and NH(3) from urea (urease route): step 1/1. The chain is Urease subunit gamma from Nostoc punctiforme (strain ATCC 29133 / PCC 73102).